Here is a 205-residue protein sequence, read N- to C-terminus: Probable inactive peroxygenase-like protein (205 aa).

Positions 79 to 88 (PVQLFGYILP) match the Proline-knot motif. Ser183 carries the post-translational modification Phosphoserine.

This sequence belongs to the caleosin family.

Its subcellular location is the lipid droplet. The chain is Probable inactive peroxygenase-like protein from Arabidopsis thaliana (Mouse-ear cress).